A 517-amino-acid polypeptide reads, in one-letter code: Argininosuccinate lyase, chloroplastic (517 aa).

The transit peptide at 1 to 45 (MGAIDLSFSQSLLFSSSRSNLSSSTHRSVSFLPPGSKSRCLPPLR) directs the protein to the chloroplast. The 2-(N(omega)-L-arginino)succinate site is built by S79, N166, and T211. Residue H212 is the Proton acceptor of the active site. Residue S333 is the Proton donor of the active site. N341, Y373, Q378, and K381 together coordinate 2-(N(omega)-L-arginino)succinate.

This sequence belongs to the lyase 1 family. Argininosuccinate lyase subfamily.

The protein resides in the plastid. It localises to the chloroplast. The catalysed reaction is 2-(N(omega)-L-arginino)succinate = fumarate + L-arginine. It participates in amino-acid biosynthesis; L-arginine biosynthesis; L-arginine from L-ornithine and carbamoyl phosphate: step 3/3. This chain is Argininosuccinate lyase, chloroplastic, found in Arabidopsis thaliana (Mouse-ear cress).